Consider the following 263-residue polypeptide: 5'-nucleotidase SurE (263 aa).

Asp10, Asp11, Ser41, and Asn95 together coordinate a divalent metal cation.

This sequence belongs to the SurE nucleotidase family. It depends on a divalent metal cation as a cofactor.

It is found in the cytoplasm. It catalyses the reaction a ribonucleoside 5'-phosphate + H2O = a ribonucleoside + phosphate. Functionally, nucleotidase that shows phosphatase activity on nucleoside 5'-monophosphates. The protein is 5'-nucleotidase SurE of Methanoculleus marisnigri (strain ATCC 35101 / DSM 1498 / JR1).